Reading from the N-terminus, the 422-residue chain is UDP-N-acetylglucosamine 1-carboxyvinyltransferase (422 aa).

A phosphoenolpyruvate-binding site is contributed by Lys22 to Asn23. Arg93 contacts UDP-N-acetyl-alpha-D-glucosamine. Residue Cys117 is the Proton donor of the active site. The residue at position 117 (Cys117) is a 2-(S-cysteinyl)pyruvic acid O-phosphothioketal. UDP-N-acetyl-alpha-D-glucosamine-binding positions include Arg122–Leu126, Asp308, and Leu330.

It belongs to the EPSP synthase family. MurA subfamily.

It localises to the cytoplasm. It carries out the reaction phosphoenolpyruvate + UDP-N-acetyl-alpha-D-glucosamine = UDP-N-acetyl-3-O-(1-carboxyvinyl)-alpha-D-glucosamine + phosphate. It functions in the pathway cell wall biogenesis; peptidoglycan biosynthesis. Functionally, cell wall formation. Adds enolpyruvyl to UDP-N-acetylglucosamine. This chain is UDP-N-acetylglucosamine 1-carboxyvinyltransferase, found in Helicobacter pylori (strain Shi470).